Here is a 104-residue protein sequence, read N- to C-terminus: L-rhamnose mutarotase (104 aa).

Substrate is bound at residue Tyr18. The active-site Proton donor is His22. Residues Tyr41 and 76–77 (WW) each bind substrate.

This sequence belongs to the rhamnose mutarotase family. In terms of assembly, homodimer.

It localises to the cytoplasm. The catalysed reaction is alpha-L-rhamnose = beta-L-rhamnose. The protein operates within carbohydrate metabolism; L-rhamnose metabolism. In terms of biological role, involved in the anomeric conversion of L-rhamnose. The sequence is that of L-rhamnose mutarotase from Listeria monocytogenes serotype 4b (strain F2365).